The sequence spans 769 residues: Calcium up-regulated protein B (769 aa).

A disordered region spans residues 1 to 22 (MINIEDISKSSNQSEEKQLKST). Ricin B-type lectin domains lie at 25-145 (KPKY…WTTF) and 158-296 (FQSK…WITN).

It belongs to the cup family.

Its subcellular location is the cytoplasm. It localises to the membrane. In terms of biological role, may play an important role in stabilizing and/or regulating the cell membrane during Ca(2+) stress or certain stages of development. The polypeptide is Calcium up-regulated protein B (cupB) (Dictyostelium discoideum (Social amoeba)).